We begin with the raw amino-acid sequence, 212 residues long: Endothelin-1 (212 aa).

Positions 1 to 17 (MDYLLMIFSLLFVACQG) are cleaved as a signal peptide. The propeptide occupies 18–50 (APETAVLGAELSAVGENGGEKPTPSPPWRLRRS). 2 disulfide bridges follow: cysteine 53–cysteine 67 and cysteine 55–cysteine 63. Positions 74-212 (VNTPEHVVPY…RYVTHNRAHW (139 aa)) are excised as a propeptide. Residues 109 to 123 (CQCASQKDKKCWNFC) are endothelin-like. Basic and acidic residues-rich tracts occupy residues 168–181 (RSSE…RSET) and 189–205 (SFHD…ERYV). The interval 168 to 212 (RSSEEHLRQTRSETMRNSVKSSFHDPKLKGKPSRERYVTHNRAHW) is disordered.

Belongs to the endothelin/sarafotoxin family. Expressed in lung, placental stem villi vessels and in cultured placental vascular smooth muscle cells.

It is found in the secreted. Functionally, endothelins are endothelium-derived vasoconstrictor peptides. Probable ligand for G-protein coupled receptors EDNRA and EDNRB which activates PTK2B, BCAR1, BCAR3 and, GTPases RAP1 and RHOA cascade in glomerular mesangial cells. Also binds the DEAR/FBXW7-AS1 receptor. Promotes mesenteric arterial wall remodeling via activation of ROCK signaling and subsequent colocalization of NFATC3 with F-actin filaments. NFATC3 then translocates to the nucleus where it subsequently promotes the transcription of the smooth muscle hypertrophy and differentiation marker ACTA2. The chain is Endothelin-1 (EDN1) from Homo sapiens (Human).